A 125-amino-acid polypeptide reads, in one-letter code: UPF0763 protein NAMH_0545 (125 aa).

The protein belongs to the UPF0763 family.

The protein is UPF0763 protein NAMH_0545 of Nautilia profundicola (strain ATCC BAA-1463 / DSM 18972 / AmH).